The primary structure comprises 272 residues: Probable feruloyl esterase C (272 aa).

The first 22 residues, 1 to 22, serve as a signal peptide directing secretion; it reads MLPTILYSAILALSALTPSALA.

The protein belongs to the faeC family.

It is found in the secreted. It carries out the reaction feruloyl-polysaccharide + H2O = ferulate + polysaccharide.. Functionally, involved in degradation of plant cell walls. Hydrolyzes the feruloyl-arabinose ester bond in arabinoxylans, and the feruloyl-galactose ester bond in pectin. Active against paranitrophenyl-acetate, methyl ferulate and wheat arabinoxylan. This is Probable feruloyl esterase C (faeC-1) from Aspergillus clavatus (strain ATCC 1007 / CBS 513.65 / DSM 816 / NCTC 3887 / NRRL 1 / QM 1276 / 107).